A 250-amino-acid chain; its full sequence is U6 snRNA phosphodiesterase 1 (250 aa).

Residues 1–31 (MALVSYSSSEEDEGETSEPPGRRLPPLPPPT) are disordered. A compositionally biased stretch (pro residues) spans 22-31 (RRLPPLPPPT). Residue His-105 is the Proton acceptor of the active site. AMP is bound at residue 105–107 (HIS). Residues Gln-149, Tyr-187, and 191-195 (SFHVS) each bind UMP. Residues Tyr-187 and 189–195 (EPSFHVS) contribute to the AMP site. His-193 acts as the Proton donor in catalysis.

Belongs to the 2H phosphoesterase superfamily. USB1 family.

The protein localises to the nucleus. It catalyses the reaction a 3'-end uridylyl-uridine-RNA = a 3'-end 2',3'-cyclophospho-uridine-RNA + uridine. The catalysed reaction is a 3'-end uridylyl-adenosine-RNA = a 3'-end 2',3'-cyclophospho-uridine-RNA + adenosine. In terms of biological role, 3'-5' RNA exonuclease that trims the 3' end of oligo(U) and oligo(A) tracts of the pre-U6 small nuclear RNA (snRNA) molecule, leading to the formation of a mature U6 snRNA 3' end-terminated with a 2',3'-cyclic phosphate. Participates in the U6 snRNA 3' end processing that prevents U6 snRNA degradation. In addition also removes uridines from the 3' end of U6atac snRNA and possibly the vault RNA VTRNA1-1. This Xenopus laevis (African clawed frog) protein is U6 snRNA phosphodiesterase 1.